The following is a 91-amino-acid chain: Potassium channel toxin TdiKIK (91 aa).

An N-terminal signal peptide occupies residues Met-1–Ala-25. Positions Gly-26–Glu-44 are excised as a propeptide. Positions Glu-58–Ser-91 constitute a BetaSPN-type CS-alpha/beta domain. Intrachain disulfides connect Cys-61-Cys-81, Cys-68-Cys-86, and Cys-72-Cys-88.

Expressed by the venom gland.

It localises to the secreted. Functionally, the full peptide presents antibacterial and cytotoxic activities. The synthetic C-terminus (AA 33-76) inhibits voltage-gated potassium channels Kv1.1/KCNA1, Kv1.2/KCNA2, and Kv1.3/KCNA3. The sequence is that of Potassium channel toxin TdiKIK from Tityus discrepans (Venezuelan scorpion).